Here is a 426-residue protein sequence, read N- to C-terminus: Glutamate-1-semialdehyde 2,1-aminomutase (426 aa).

An N6-(pyridoxal phosphate)lysine modification is found at lysine 265.

This sequence belongs to the class-III pyridoxal-phosphate-dependent aminotransferase family. HemL subfamily. As to quaternary structure, homodimer. Pyridoxal 5'-phosphate serves as cofactor.

Its subcellular location is the cytoplasm. It catalyses the reaction (S)-4-amino-5-oxopentanoate = 5-aminolevulinate. The protein operates within porphyrin-containing compound metabolism; protoporphyrin-IX biosynthesis; 5-aminolevulinate from L-glutamyl-tRNA(Glu): step 2/2. In Aliarcobacter butzleri (strain RM4018) (Arcobacter butzleri), this protein is Glutamate-1-semialdehyde 2,1-aminomutase.